A 250-amino-acid polypeptide reads, in one-letter code: Small ribosomal subunit protein uS3 (250 aa).

The KH type-2 domain maps to Ile-39 to Lys-111.

Belongs to the universal ribosomal protein uS3 family. In terms of assembly, part of the 30S ribosomal subunit. Forms a tight complex with proteins S10 and S14.

Binds the lower part of the 30S subunit head. Binds mRNA in the 70S ribosome, positioning it for translation. The polypeptide is Small ribosomal subunit protein uS3 (Phytoplasma australiense).